The sequence spans 208 residues: FMN-dependent NADH:quinone oxidoreductase (208 aa).

FMN is bound by residues Ser-9 and 15-17; that span reads SHS.

The protein belongs to the azoreductase type 1 family. In terms of assembly, homodimer. Requires FMN as cofactor.

It catalyses the reaction 2 a quinone + NADH + H(+) = 2 a 1,4-benzosemiquinone + NAD(+). The enzyme catalyses N,N-dimethyl-1,4-phenylenediamine + anthranilate + 2 NAD(+) = 2-(4-dimethylaminophenyl)diazenylbenzoate + 2 NADH + 2 H(+). Functionally, quinone reductase that provides resistance to thiol-specific stress caused by electrophilic quinones. Its function is as follows. Also exhibits azoreductase activity. Catalyzes the reductive cleavage of the azo bond in aromatic azo compounds to the corresponding amines. The chain is FMN-dependent NADH:quinone oxidoreductase from Bordetella petrii (strain ATCC BAA-461 / DSM 12804 / CCUG 43448).